We begin with the raw amino-acid sequence, 653 residues long: Laccase ustL (653 aa).

The N-terminal stretch at 1-20 (MTSLTGLALLLCVLASQSWA) is a signal peptide. 2 Plastocyanin-like domains span residues 31 to 143 (WEKG…RPKR) and 173 to 362 (VLSD…ATQV). N-linked (GlcNAc...) asparagine glycosylation is found at asparagine 74, asparagine 220, asparagine 235, asparagine 255, asparagine 277, asparagine 405, asparagine 463, and asparagine 479. The Plastocyanin-like 3 domain maps to 463 to 594 (NQTVGTEDEK…GGMSIALLDG (132 aa)). Residues histidine 501, histidine 504, histidine 506, histidine 576, cysteine 577, histidine 578, and histidine 582 each contribute to the Cu cation site. N-linked (GlcNAc...) asparagine glycosylation occurs at asparagine 623.

This sequence belongs to the multicopper oxidase family.

The enzyme catalyses 4 norrubrofusarin + O2 = 2 ustilaginoidin A + 2 H2O. Its pathway is secondary metabolite biosynthesis. Its function is as follows. Laccase; part of the gene cluster that mediates the biosynthesis of ustilaginoidins, dimeric gamma-naphthopyrones isolated from different fungal species. The first step in the biosynthesis of ustilaginoidins is the production of gamma-naphthopyrone precursor YWA1 by the non-reducing polyketide synthase ustP, via condensation of one acetyl-CoA starter unit with 6 malonyl-CoA units. YWA1 is then probably substrate of the ustZ to yield norrubrofusarin via a dehydration reaction. A key enzyme in the biosynthetic pathway is the laccase ustL, which catalyzes the oxidative dimerization of norrubrofusarin to ustilaginoidin A. It can produce the M- and P-atropisomers in varying amounts, depending on the reaction conditions. For the biosynthesis of 3-methylustilaginoid in derivatives such as chaetochromin A, a methylated derivative of YWA1 is required. The C-methylation is considered to be catalyzed by ustM, the phosphopantetheine attachment site of which indicates that it acts on the growing polyketide chain before release of the product. For the biosynthesis of chaetochromin A, it is assumed that saturation of the D2 double bond takes place before dimerization, and is probably catalyzed by an external reductase because no candidate gene was identified within the cluster. This Ustilaginoidea virens (Rice false smut fungus) protein is Laccase ustL.